The chain runs to 632 residues: tRNA endonuclease VMS1 (632 aa).

The C2H2-type zinc-finger motif lies at 72–96; sequence MRCSVCQMSFDSRNEQKAHYQTDYH. Positions 123–155 are disordered; that stretch reads HGIKSEDENSGGEQTSSDHEESEEASDRDPDLQ. Residues 232–392 enclose the VLRF1 domain; it reads PMAISALFMV…KKAWCELSYL (161 aa). The active site involves Gln295. 2 ANK repeats span residues 470-500 and 504-530; these read LTPTMLHYASQQGMKQMALILLSNIKCDPTI and LGRTAWDLNRNDDVRHAFQIARYNLGE. 2 coiled-coil regions span residues 544 to 582 and 608 to 632; these read LSREQVDEINEKKKAIENEKAEKLIKLELEAAKEKQRFA and TDEQRRRLMREQRARAAEERMKKKY. A compositionally biased stretch (basic and acidic residues) spans 578 to 589; that stretch reads KQRFAKDAERGP. The segment at 578–632 is disordered; that stretch reads KQRFAKDAERGPGKKLTNIPSIQQQNLNSLTDEQRRRLMREQRARAAEERMKKKY. Residues 595 to 608 are compositionally biased toward polar residues; that stretch reads NIPSIQQQNLNSLT. Positions 609–632 are enriched in basic and acidic residues; sequence DEQRRRLMREQRARAAEERMKKKY.

This sequence belongs to the ANKZF1/VMS1 family. In terms of assembly, associates with 60S ribosomal subunit. Interacts with CDC48. Interacts with NPL4.

It localises to the cytoplasm. The protein resides in the mitochondrion. Its subcellular location is the endoplasmic reticulum membrane. In terms of biological role, endonuclease that cleaves polypeptidyl-tRNAs downstream of the ribosome-associated quality control (RQC) pathway to release incompletely synthesized polypeptides for degradation. The RQC pathway disassembles aberrantly stalled translation complexes to recycle or degrade the constituent parts. VMS1 acts downstream disassembly of stalled ribosomes and specifically cleaves off the terminal 3'-CCA nucleotides universal to all tRNAs from polypeptidyl-tRNAs, releasing (1) ubiquitinated polypeptides from 60S ribosomal subunit for degradation by the ERAD pathway and (2) cleaved tRNAs for recycling. Component of an evolutionarily conserved system for ubiquitin-mediated mitochondria-associated protein degradation (MAD), which is necessary to maintain mitochondrial, cellular, and organismal viability. The sequence is that of tRNA endonuclease VMS1 from Saccharomyces cerevisiae (strain ATCC 204508 / S288c) (Baker's yeast).